Consider the following 715-residue polypeptide: MKKVVTVCPYCASGCKINLVVDNGKIVRAEAAQGKTNQGTLCLKGYYGWDFINDTQILTPRLKTPMIRRQRGGKLEPVSWDEALNYVAERLSAIKEKYGPDAIQTTGSSRGTGNETNYVMQKFARAVIGTNNVDCCARVUHGPSVAGLHQSVGNGAMSNAINEIDNTDLVFVFGYNPADSHPIVANHVINAKRNGAKIIVCDPRKIETARIADMHIALKNGSNIALLNAMGHVIIEENLYDKAFVASRTEGFEEYRKIVEGYTPESVEDITGVSASEIRQAARMYAQAKSAAILWGMGVTQFYQGVETVRSLTSLAMLTGNLGKPHAGVNPVRGQNNVQGACDMGALPDTYPGYQYVKDPANREKFAKAWGVESLPAHTGYRISELPHRAAHGEVRAAYIMGEDPLQTDAELSAVRKAFEDLELVIVQDIFMTKTASAADVILPSTSWGEHEGVFTAADRGFQRFFKAVEPKWDLKTDWQIISEIATRMGYPMHYNNTQEIWDELRHLCPDFYGATYEKMGELGFIQWPCRDTSDADQGTSYLFKEKFDTPNGLAQFFTCDWVAPIDKLTDEYPMVLSTVREVGHYSCRSMTGNCAALAALADEPGYAQINTEDAKRLGIEDEALVWVHSRKGKIITRAQVSDRPNKGAIYMTYQWWIGACNELVTENLSPITKTPEYKYCAVRVEPIADQRAAEQYVIDEYNKLKTRLREAALA.

Residues 1–56 enclose the 4Fe-4S Mo/W bis-MGD-type domain; that stretch reads MKKVVTVCPYCASGCKINLVVDNGKIVRAEAAQGKTNQGTLCLKGYYGWDFINDTQ. [4Fe-4S] cluster is bound by residues C8, C11, C15, and C42. The active-site Electron donor/acceptor is K44. Residues R110, U140, N176, D179, S180, C201, D202, R204, G221, N223, M297, Q335, D404, T408, Q428, D429, S445, D478, R581, E582, H585, S587, Y678, and K679 each coordinate Mo-bis(molybdopterin guanine dinucleotide). The active-site Proton donor/acceptor is the U140. U140 is a non-standard amino acid (selenocysteine).

This sequence belongs to the prokaryotic molybdopterin-containing oxidoreductase family. Consists of two separable enzymatic activities: a formate dehydrogenase component (FDH-H) and hydrogenase-3. [4Fe-4S] cluster serves as cofactor. Requires Mo-bis(molybdopterin guanine dinucleotide) as cofactor.

The enzyme catalyses formate + A + H(+) = AH2 + CO2. Inhibited by aerobic conditions. Functionally, decomposes formic acid to hydrogen and carbon dioxide under anaerobic conditions in the absence of exogenous electron acceptors. In Escherichia coli (strain K12), this protein is Formate dehydrogenase H (fdhF).